A 320-amino-acid polypeptide reads, in one-letter code: Acetyl-coenzyme A carboxylase carboxyl transferase subunit alpha (320 aa).

One can recognise a CoA carboxyltransferase C-terminal domain in the interval 41–295 (RIEEKAGQAL…GEAIAQAFDE (255 aa)).

It belongs to the AccA family. As to quaternary structure, acetyl-CoA carboxylase is a heterohexamer composed of biotin carboxyl carrier protein (AccB), biotin carboxylase (AccC) and two subunits each of ACCase subunit alpha (AccA) and ACCase subunit beta (AccD).

The protein localises to the cytoplasm. The enzyme catalyses N(6)-carboxybiotinyl-L-lysyl-[protein] + acetyl-CoA = N(6)-biotinyl-L-lysyl-[protein] + malonyl-CoA. It participates in lipid metabolism; malonyl-CoA biosynthesis; malonyl-CoA from acetyl-CoA: step 1/1. Component of the acetyl coenzyme A carboxylase (ACC) complex. First, biotin carboxylase catalyzes the carboxylation of biotin on its carrier protein (BCCP) and then the CO(2) group is transferred by the carboxyltransferase to acetyl-CoA to form malonyl-CoA. This Bradyrhizobium sp. (strain BTAi1 / ATCC BAA-1182) protein is Acetyl-coenzyme A carboxylase carboxyl transferase subunit alpha.